A 365-amino-acid chain; its full sequence is 3-isopropylmalate dehydrogenase (365 aa).

78–91 is a binding site for NAD(+); that stretch reads GPKWDTLPAEERPE. 4 residues coordinate substrate: arginine 99, arginine 109, arginine 138, and aspartate 227. Residues aspartate 227, aspartate 251, and aspartate 255 each contribute to the Mg(2+) site. 285 to 297 is an NAD(+) binding site; the sequence is GSAPDIAGKNIAN.

It belongs to the isocitrate and isopropylmalate dehydrogenases family. LeuB type 1 subfamily. Homodimer. Requires Mg(2+) as cofactor. The cofactor is Mn(2+).

The protein localises to the cytoplasm. It catalyses the reaction (2R,3S)-3-isopropylmalate + NAD(+) = 4-methyl-2-oxopentanoate + CO2 + NADH. It participates in amino-acid biosynthesis; L-leucine biosynthesis; L-leucine from 3-methyl-2-oxobutanoate: step 3/4. Its function is as follows. Catalyzes the oxidation of 3-carboxy-2-hydroxy-4-methylpentanoate (3-isopropylmalate) to 3-carboxy-4-methyl-2-oxopentanoate. The product decarboxylates to 4-methyl-2 oxopentanoate. The chain is 3-isopropylmalate dehydrogenase from Syntrophotalea carbinolica (strain DSM 2380 / NBRC 103641 / GraBd1) (Pelobacter carbinolicus).